Consider the following 255-residue polypeptide: Small ribosomal subunit protein uS2 (255 aa).

This sequence belongs to the universal ribosomal protein uS2 family.

This Streptococcus pyogenes serotype M3 (strain ATCC BAA-595 / MGAS315) protein is Small ribosomal subunit protein uS2.